The chain runs to 66 residues: MKASDVRGFTADQLKDELAKLKKEQFNLRFQKATGQLEKSSRINEVRKDIARVKTIARQKAAEVKA.

Belongs to the universal ribosomal protein uL29 family.

The polypeptide is Large ribosomal subunit protein uL29 (Rhizobium leguminosarum bv. trifolii (strain WSM2304)).